The chain runs to 111 residues: Magnetosome protein MamF (111 aa).

The Cytoplasmic portion of the chain corresponds to 1–17; that stretch reads MAETILIETKTAGGNCR. A helical membrane pass occupies residues 18–38; the sequence is SYLMAGASYLGILCFVPLLMS. The Lumenal segment spans residues 39-50; the sequence is RDDEYVYFHAKQ. A helical membrane pass occupies residues 51–71; that stretch reads GLVLWMWSILAMFALHLPGIG. Position 72 (Lys-72) is a topological domain, cytoplasmic. The helical transmembrane segment at 73–93 threads the bilayer; sequence WLFGFSSMGVLMLSVVGLVSV. At 94 to 111 the chain is on the lumenal side; the sequence is ALRRTWRLPLISHVVALI.

It belongs to the magnetosome MamF/MmsF protein family. As to quaternary structure, may form homooligomers. Subject to cleavage or degradation; identified by N-terminal sequencing of proteins that are about 103, 92 and 15 kDa in size.

The protein resides in the magnetosome membrane. Plays a role in regulating magnetite crystal size; partially redundant function with MmsF. This chain is Magnetosome protein MamF, found in Magnetospirillum gryphiswaldense (strain DSM 6361 / JCM 21280 / NBRC 15271 / MSR-1).